Consider the following 522-residue polypeptide: Maturase K (522 aa).

It belongs to the intron maturase 2 family. MatK subfamily.

It is found in the plastid. It localises to the chloroplast. Functionally, usually encoded in the trnK tRNA gene intron. Probably assists in splicing its own and other chloroplast group II introns. This is Maturase K from Iris domestica (Leopard lily).